The following is a 539-amino-acid chain: MLRLARPLCVQTVKASKLSRLWSRPAALMSTLLIHHPQYAWLQDLGLREDNEGVFNGSWGGRGEVITTYCPANNEPIARVRQASMKDYEETIGKAKKAWNIWADIPAPKRGEIVRKIGDALREKIQLLGRLVSLEMGKILVEGIGEVQEYVDVCDYAAGLSRMIGGPTLPSERPGHALMEQWNPLGLVGIITAFNFPVAVFGWNNAIALITGNVCLWKGAPTTSLVSIAVTKIIAKVLEDNLLPGAICSLTCGGADMGTAMARDERVNLLSFTGSTQVGKQVALMVQERFGKSLLELGGNNAIIAFEDADLSLVLPSALFAAVGTAGQRCTTVRRLFLHESIHDEVVDRLKNAYSQIRVGNPWDPNILYGPLHTKQAVSMFVQAVEEAKKEGGTVVYGGKVMDHPGNYVEPTIVTGLVHDAPIVHKETFAPILYVFKFKNEEEVFEWNNEVKQGLSSSIFTKDLGRIFRWLGPKGSDCGIVNVNIPTSGAEIGGAFGGEKHTGGGRESGSDAWKQYMRRSTCTINYSTALPLAQGIKFQ.

A mitochondrion-targeting transit peptide spans 1 to 26 (MLRLARPLCVQTVKASKLSRLWSRPA). N6-acetyllysine; alternate occurs at positions 86, 94, and 97. 3 positions are modified to N6-succinyllysine; alternate: K86, K94, and K97. NAD(+) is bound by residues 192-194 (TAF), K218, 258-259 (GT), 274-275 (GS), 274-279 (GSTQVG), and 296-297 (EL). The active-site Proton acceptor is E296. C330 serves as the catalytic Nucleophile. T331 contacts (S)-2-amino-6-oxohexanoate. E427 contacts NAD(+). K462 carries the post-translational modification N6-acetyllysine. Residues G489 and A490 each contribute to the (S)-2-amino-6-oxohexanoate site. N6-acetyllysine is present on K500. At K537 the chain carries N6-succinyllysine.

It belongs to the aldehyde dehydrogenase family. Homotetramer. Abundant in kidney, liver, cochlea and outer hair cells but not inner hair cells or vestibular type I hair cells. Very low levels in lung, brain, intestine and pancreas.

The protein localises to the cytoplasm. It localises to the cytosol. Its subcellular location is the nucleus. It is found in the mitochondrion. The enzyme catalyses nonanal + NAD(+) + H2O = nonanoate + NADH + 2 H(+). It catalyses the reaction (S)-2-amino-6-oxohexanoate + NAD(+) + H2O = L-2-aminoadipate + NADH + 2 H(+). It carries out the reaction betaine aldehyde + NAD(+) + H2O = glycine betaine + NADH + 2 H(+). The catalysed reaction is an aldehyde + NAD(+) + H2O = a carboxylate + NADH + 2 H(+). The enzyme catalyses hexanal + NAD(+) + H2O = hexanoate + NADH + 2 H(+). It catalyses the reaction octanal + NAD(+) + H2O = octanoate + NADH + 2 H(+). It carries out the reaction (E)-non-2-enal + NAD(+) + H2O = (E)-non-2-enoate + NADH + 2 H(+). The catalysed reaction is (E)-4-hydroxynon-2-enal + NAD(+) + H2O = (E)-4-hydroxynon-2-enoate + NADH + 2 H(+). It functions in the pathway amine and polyamine biosynthesis; betaine biosynthesis via choline pathway; betaine from betaine aldehyde: step 1/1. Multifunctional enzyme mediating important protective effects. Metabolizes betaine aldehyde to betaine, an important cellular osmolyte and methyl donor. Protects cells from oxidative stress by metabolizing a number of lipid peroxidation-derived aldehydes. Involved in lysine catabolism. In Rattus norvegicus (Rat), this protein is Alpha-aminoadipic semialdehyde dehydrogenase.